Here is a 426-residue protein sequence, read N- to C-terminus: Gamma-glutamyl phosphate reductase (426 aa).

It belongs to the gamma-glutamyl phosphate reductase family.

The protein localises to the cytoplasm. It catalyses the reaction L-glutamate 5-semialdehyde + phosphate + NADP(+) = L-glutamyl 5-phosphate + NADPH + H(+). The protein operates within amino-acid biosynthesis; L-proline biosynthesis; L-glutamate 5-semialdehyde from L-glutamate: step 2/2. In terms of biological role, catalyzes the NADPH-dependent reduction of L-glutamate 5-phosphate into L-glutamate 5-semialdehyde and phosphate. The product spontaneously undergoes cyclization to form 1-pyrroline-5-carboxylate. This chain is Gamma-glutamyl phosphate reductase, found in Ralstonia pickettii (strain 12J).